A 224-amino-acid chain; its full sequence is MYVFCICDLSKRFSLSFQPNFLCELGLQKQGFFHVAGVDEVGRGPLAGPVVTAAVILDKDRIPDGLNDSKKLSFLQRNRLYHEILQSALAASIASLCARTIDQSNIRKATLEAMRRCIIGLAVPAHYVLVDGRDIPSELPCPAMALIKGDQRSVSIAAASIIAKVTRDRMMECAGQVYTNYGLEKHVGYATLAHRRALDKYGPIVGLHRYSFAPLKERYRNDVS.

The RNase H type-2 domain occupies 33–224; sequence FHVAGVDEVG…LKERYRNDVS (192 aa). A divalent metal cation contacts are provided by Asp-39, Glu-40, and Asp-131.

The protein belongs to the RNase HII family. Mn(2+) serves as cofactor. Requires Mg(2+) as cofactor.

The protein resides in the cytoplasm. It catalyses the reaction Endonucleolytic cleavage to 5'-phosphomonoester.. In terms of biological role, endonuclease that specifically degrades the RNA of RNA-DNA hybrids. This Bartonella tribocorum (strain CIP 105476 / IBS 506) protein is Ribonuclease HII.